The following is a 323-amino-acid chain: Mas-related G-protein coupled receptor member X1 (323 aa).

At 1–30 (MDPTISSLSTESTTLNKTGHPSCRPILTLS) the chain is on the extracellular side. A glycan (N-linked (GlcNAc...) asparagine) is linked at Asn16. Residues 31–51 (FLVPIITLLGLAGNTIVLWLL) form a helical membrane-spanning segment. The Cytoplasmic segment spans residues 52-59 (GFRMRRKA). The chain crosses the membrane as a helical span at residues 60–80 (ISVYVLNLSLADSFFLCCHFI). The Extracellular segment spans residues 81-100 (DSLMRIMNFYGIYAHKLSKE). Residues 101-121 (ILGNAAIIPYISGLSILSAIS) form a helical membrane-spanning segment. Residues 122 to 143 (TERCLSVLWPIWYHCHRPRNMS) are Cytoplasmic-facing. A helical transmembrane segment spans residues 144-164 (AIICVLIWVLSFLMGILDWFF). Residues 165-180 (SGFLGETHHHLWKNVD) lie on the Extracellular side of the membrane. The helical transmembrane segment at 181-201 (FIVTAFLIFLFMLLFGSSLAL) threads the bilayer. Residues 202–226 (LVRILCGSRRKPLSRLYVTISLTVM) are Cytoplasmic-facing. A helical membrane pass occupies residues 227 to 247 (VYLICGLPLGLYLFLLYWFGI). At 248–258 (HLHYPFCHIYQ) the chain is on the extracellular side. Residues 259–279 (VTVLLSCVNSSANPIIYFLVG) traverse the membrane as a helical segment. The Cytoplasmic segment spans residues 280–323 (SFRHRKKHRSLKMVLKRALEETPEEDEYTDSHVQKPTEISERRC).

The protein belongs to the G-protein coupled receptor 1 family. Mas subfamily. Uniquely localized in a subset of small dorsal root and trigeminal sensory neurons. Associated preferentially with IB4 class of small-diameter somatosensory afferents (also known as nociceptors).

It is found in the cell membrane. Functionally, orphan receptor activated by neuropeptides terminating in Arg-Phe or Arg-Phe-amide. Mediates its action by association with G proteins that activate a phosphatidylinositol-calcium second messenger system. Its effect is mediated by G(q) and G(11) proteins. May regulate the function of nociceptive neurons by modulation of pain perception. The protein is Mas-related G-protein coupled receptor member X1 (Mrgprx1) of Rattus norvegicus (Rat).